A 328-amino-acid chain; its full sequence is uncharacterized protein (328 aa).

An N-terminal signal peptide occupies residues 1 to 24 (MKSIKGLGKLLLASSILFSSSAFA).

The protein belongs to the bacterial solute-binding protein 7 family.

Its subcellular location is the periplasm. This is an uncharacterized protein from Haemophilus influenzae (strain ATCC 51907 / DSM 11121 / KW20 / Rd).